A 662-amino-acid chain; its full sequence is Polyadenylate-binding protein 4 (662 aa).

The tract at residues 1–23 (MAQVQAPSSHSPPPPAVVNDGAA) is disordered. 4 consecutive RRM domains span residues 46-124 (CSLY…YSSR), 134-211 (GNLF…PFLR), 225-302 (TNVY…KAQK), and 328-405 (LNLY…LAQR). 2 stretches are compositionally biased toward low complexity: residues 480–489 (PMMQPGQQGP) and 506–518 (QQPMPYMQPQMMP). 2 disordered regions span residues 480–518 (PMMQPGQQGPRPGGRRSGDGPMRHQHQQPMPYMQPQMMP) and 634–662 (NQPSSQGSEGNKSGSPSDLLASLSINDHL). One can recognise a PABC domain in the interval 558–635 (SAGQLATSLA…ALDVLRNVNQ (78 aa)). Residues 634–649 (NQPSSQGSEGNKSGSP) are compositionally biased toward polar residues.

This sequence belongs to the polyadenylate-binding protein type-1 family. As to quaternary structure, interacts with ERD15/CID1. Interacts with Turnip mosaic virus (TuMV) VPg-Pro.

The protein localises to the cytoplasm. The protein resides in the nucleus. Its function is as follows. Binds the poly(A) tail of mRNA. Appears to be an important mediator of the multiple roles of the poly(A) tail in mRNA biogenesis, stability and translation. During infection with potyvirus TuMV, acts as a potential integral component of the viral replicase complex that could play an important role in the regulation of potyviral RNA-dependent RNA polymerase (RdRp). The chain is Polyadenylate-binding protein 4 (PAB4) from Arabidopsis thaliana (Mouse-ear cress).